The primary structure comprises 228 residues: UPF0758 protein MW1604 (228 aa).

The region spanning 102-224 is the MPN domain; it reads KITQPSDVAD…FTSLVEAGYF (123 aa). His-173, His-175, and Asp-186 together coordinate Zn(2+). A JAMM motif motif is present at residues 173–186; that stretch reads HNHPSGDVTPSQED.

The protein belongs to the UPF0758 family.

This Staphylococcus aureus (strain MW2) protein is UPF0758 protein MW1604.